A 123-amino-acid chain; its full sequence is Double-stranded DNA deaminase immunity protein (123 aa).

The toxic domain forms a 1:1 complex with the DddI immunity protein. This protein blocks the active site of the toxin.

Its function is as follows. Immunity protein component of a toxin-immunity protein module, which functions as a cellular contact-dependent growth inhibition (CDI) system. CDI modules allow bacteria to communicate with and inhibit the growth of closely related neighboring bacteria in a contact-dependent fashion. Bacteria that have this module inhibit or kill bacteria without it, giving them a growth advantage. Specifically inhibits the toxic activity of cognate toxin DddA (C-terminal 163 residue fragment) upon expression in E.coli. The chain is Double-stranded DNA deaminase immunity protein from Burkholderia cenocepacia (strain H111).